The chain runs to 440 residues: Protein CyaD (440 aa).

Over 1 to 55 the chain is Cytoplasmic; it reads MRRALRELAARHGRVLAASWRQRHRRPAGWFDPVETEFLPSALSLQERPISPTAR. Residues 56 to 75 form a helical membrane-spanning segment; that stretch reads WLARILMALAAGALVWSVVG. The Periplasmic segment spans residues 76-440; sequence KTEIVVHAAG…RHAGESLGER (365 aa).

The protein belongs to the membrane fusion protein (MFP) (TC 8.A.1) family.

It localises to the cell inner membrane. Its function is as follows. CyaD is necessary for transport of calmodulin-sensitive adenylate cyclase-hemolysin (cyclolysin). This is Protein CyaD (cyaD) from Bordetella pertussis (strain ATCC 9797 / DSM 5571 / CCUG 30873 / LMG 14455 / NCTC 10739 / 18323).